The following is a 388-amino-acid chain: tRNA (guanine-N(7)-)-methyltransferase (388 aa).

3 residues coordinate S-adenosyl-L-methionine: E129, E154, and D181. Residues K207 and D237 each contribute to the substrate site.

The protein belongs to the class I-like SAM-binding methyltransferase superfamily. TrmB family.

It carries out the reaction guanosine(46) in tRNA + S-adenosyl-L-methionine = N(7)-methylguanosine(46) in tRNA + S-adenosyl-L-homocysteine. Its pathway is tRNA modification; N(7)-methylguanine-tRNA biosynthesis. Functionally, catalyzes the formation of N(7)-methylguanine at position 46 (m7G46) in tRNA. This is tRNA (guanine-N(7)-)-methyltransferase from Wolinella succinogenes (strain ATCC 29543 / DSM 1740 / CCUG 13145 / JCM 31913 / LMG 7466 / NCTC 11488 / FDC 602W) (Vibrio succinogenes).